Consider the following 473-residue polypeptide: Cysteine--tRNA ligase (473 aa).

Cys-30 lines the Zn(2+) pocket. Positions 32–42 (MTVYDYCHIGH) match the 'HIGH' region motif. Positions 213, 238, and 242 each coordinate Zn(2+). The 'KMSKS' region motif lies at 270–274 (KMSKS). An ATP-binding site is contributed by Lys-273.

The protein belongs to the class-I aminoacyl-tRNA synthetase family. As to quaternary structure, monomer. Zn(2+) is required as a cofactor.

The protein localises to the cytoplasm. The enzyme catalyses tRNA(Cys) + L-cysteine + ATP = L-cysteinyl-tRNA(Cys) + AMP + diphosphate. The protein is Cysteine--tRNA ligase of Acinetobacter baumannii (strain AB307-0294).